The primary structure comprises 308 residues: Putative cathepsin L 3 (308 aa).

An N-terminal signal peptide occupies residues Met1–Leu21. The propeptide at Gln22–Glu110 is activation peptide. 2 disulfides stabilise this stretch: Cys129-Cys170 and Cys254-Cys298. Catalysis depends on residues His261 and Asn278.

The protein belongs to the peptidase C1 family.

The protein resides in the secreted. It catalyses the reaction Specificity close to that of papain. As compared to cathepsin B, cathepsin L exhibits higher activity toward protein substrates, but has little activity on Z-Arg-Arg-NHMec, and no peptidyl-dipeptidase activity.. Functionally, may be involved in extracellular digestion. The polypeptide is Putative cathepsin L 3 (Paramecium tetraurelia).